Reading from the N-terminus, the 375-residue chain is V-type proton ATPase subunit C (375 aa).

This sequence belongs to the V-ATPase C subunit family. As to quaternary structure, V-ATPase is a heteromultimeric enzyme composed of a peripheral catalytic V1 complex (components A to H) attached to an integral membrane V0 proton pore complex (components: a, c, c'', d and e). In terms of processing, phosphorylated on Ser/Thr residues by WNK8.

The protein localises to the vacuole membrane. Subunit of the peripheral V1 complex of vacuolar ATPase. Subunit C is necessary for the assembly of the catalytic sector of the enzyme and is likely to have a specific function in its catalytic activity. V-ATPase is responsible for acidifying a variety of intracellular compartments in eukaryotic cells. The protein is V-type proton ATPase subunit C (VHA-C) of Arabidopsis thaliana (Mouse-ear cress).